The sequence spans 874 residues: GRB2-associated and regulator of MAPK protein 2 (874 aa).

Positions 12 to 339 (RWSMGAFPLD…LLAGDPRVER (328 aa)) are CABIT. Positions 188–206 (GGGGPASAGAAGGTGGGGA) are enriched in gly residues. 5 disordered regions span residues 188–207 (GGGG…GGAR), 388–422 (PGLA…EPAA), 437–545 (GPEG…SPSP), 563–598 (GESS…AASL), and 625–742 (APFG…PSKA). 2 stretches are compositionally biased toward low complexity: residues 388 to 403 (PGLA…APAG) and 518 to 545 (SPSS…SPSP). Residues 575-585 (PSTTQPSQASR) are compositionally biased toward polar residues. Low complexity-rich tracts occupy residues 632–650 (PFSG…SSGP) and 658–691 (ATSG…SSSS). Residue S735 is modified to Phosphoserine. Positions 807–871 (SALSLEEVSR…KIMQFIKGWR (65 aa)) constitute an SAM domain.

This sequence belongs to the GAREM family.

Functionally, probable adapter protein that may provide a link between cell surface epidermal growth factor receptor and the MAPK/ERK signaling pathway. The sequence is that of GRB2-associated and regulator of MAPK protein 2 (GAREM2) from Homo sapiens (Human).